A 132-amino-acid polypeptide reads, in one-letter code: Large ribosomal subunit protein bL17 (132 aa).

It belongs to the bacterial ribosomal protein bL17 family. Part of the 50S ribosomal subunit. Contacts protein L32.

The protein is Large ribosomal subunit protein bL17 of Variovorax paradoxus (strain S110).